The following is a 159-amino-acid chain: L-alanine exporter AlaE (159 aa).

A run of 4 helical transmembrane segments spans residues Phe-17–Met-37, Leu-48–Leu-68, Met-86–Ala-106, and Gln-110–Gly-130.

Belongs to the AlaE exporter family.

It is found in the cell inner membrane. Its function is as follows. Exports L-alanine. The polypeptide is L-alanine exporter AlaE (Photobacterium profundum (strain SS9)).